We begin with the raw amino-acid sequence, 307 residues long: Ornithine carbamoyltransferase (307 aa).

Carbamoyl phosphate contacts are provided by residues 50–53 (STRT), glutamine 77, arginine 101, and 128–131 (HPCQ). L-ornithine is bound by residues asparagine 160, aspartate 224, and 228–229 (SM). Residues 264–265 (CL) and arginine 292 each bind carbamoyl phosphate.

The protein belongs to the aspartate/ornithine carbamoyltransferase superfamily. OTCase family.

It localises to the cytoplasm. The catalysed reaction is carbamoyl phosphate + L-ornithine = L-citrulline + phosphate + H(+). Its pathway is amino-acid biosynthesis; L-arginine biosynthesis; L-arginine from L-ornithine and carbamoyl phosphate: step 1/3. Its function is as follows. Reversibly catalyzes the transfer of the carbamoyl group from carbamoyl phosphate (CP) to the N(epsilon) atom of ornithine (ORN) to produce L-citrulline. The protein is Ornithine carbamoyltransferase of Clavibacter sepedonicus (Clavibacter michiganensis subsp. sepedonicus).